Here is a 344-residue protein sequence, read N- to C-terminus: MKNTMKRMFCSMTVLVTAPYNEEGRKELENLFGSVAYQSWKEQGRAYREDELIQLLKATNATGLITELDQVTDSVFASVPELSFVGVCRGMPSNVDVAAASKRGIPVFYTPGRNAQAVAEMFIGNVISFLRHTSASNQWLKDGEWDSDYLQAYVKFKGNELTGKTVGMIGFGAVGQRIAKLLTAFDCKIKYYDPYIQDDHPLYEKASLKTVFSDSDIVSVHLPRTEETLGLIDRQYFDLMKESAIFVNTSRAVVVNREDLLFVLKEHKISGAILDVFYHEPPEESDYELISLPNVLATPHLAGATFEVEDHHVTILNKALKKWKGEKTLNIQTMYNKDALKTGG.

Asp193 lines the NAD(+) pocket. Arg251 is a catalytic residue. An NAD(+)-binding site is contributed by Asp275. The active site involves Glu280. His300 functions as the Proton donor in the catalytic mechanism.

This sequence belongs to the D-isomer specific 2-hydroxyacid dehydrogenase family.

This Bacillus subtilis (strain 168) protein is Putative 2-hydroxyacid dehydrogenase YoaD (yoaD).